Here is a 282-residue protein sequence, read N- to C-terminus: MHTLKTLVLMVFLSVFFIFVGSLIGGKQGATFALIMALGMNFFAYFFSHKIVLAMYGAKEVSEAEAPELYNIVRRLAQKAELPMPKVYIIDSEQPNAFATGRSPKHGVVAVTTGIMRILSREELEGVIGHELAHIKHRDILISTIAATIAGAISYLAQMAMWANIFGGRHDDEEGGGHPIVALLMMIIAPLIAMIIQLAISRSREYAADEDGARIAGNPLYLSNALRKLHYASQAIPMDANPGTAHMFIVNPLSGKTLMKLFSTHPPIDERIARLEAMARRY.

2 helical membrane passes run threonine 6 to glycine 26 and glycine 29 to histidine 49. Residue histidine 130 participates in Zn(2+) binding. Residue glutamate 131 is part of the active site. Position 134 (histidine 134) interacts with Zn(2+). The next 2 membrane-spanning stretches (helical) occupy residues isoleucine 140–alanine 160 and isoleucine 180–isoleucine 200. Glutamate 205 provides a ligand contact to Zn(2+).

This sequence belongs to the peptidase M48B family. It depends on Zn(2+) as a cofactor.

The protein resides in the cell inner membrane. This chain is Protease HtpX homolog, found in Thermodesulfovibrio yellowstonii (strain ATCC 51303 / DSM 11347 / YP87).